Here is a 355-residue protein sequence, read N- to C-terminus: Probable zinc transporter 12 (355 aa).

The first 25 residues, 1–25, serve as a signal peptide directing secretion; the sequence is MSRFRKTLVSAFVLCLVIFPLLVSA. The Extracellular portion of the chain corresponds to 26–50; it reads AEEENQCGGSKGGSAAEKASALKYK. Residues 51–71 form a helical membrane-spanning segment; sequence IIAFFSILIAGVFGVCLPIFG. Over 72–77 the chain is Cytoplasmic; the sequence is LKTESN. Residues 78 to 98 traverse the membrane as a helical segment; sequence FFMYVKAFAAGVILATGFVHI. Over 99–116 the chain is Extracellular; that stretch reads LPDATESLTSSCLGEEPP. Residues 117-137 traverse the membrane as a helical segment; that stretch reads WGDFPMTGLVAMAASILTMLI. Over 138–200 the chain is Cytoplasmic; it reads ESFASGYLNR…DDDHIDMRKK (63 aa). A disordered region spans residues 156 to 183; that stretch reads TLPVSTGGEEEHAHTGSAHTHASQGHSH. Residues 201-221 form a helical membrane-spanning segment; it reads IVTQILELGIVVHSVIIGISL. Topologically, residues 222–231 are extracellular; it reads GASPSVSTIK. A helical membrane pass occupies residues 232–252; the sequence is PLIAAITFHQLFEGFGLGGCI. Residues 253–261 are Cytoplasmic-facing; it reads SEAKFRVKK. A helical transmembrane segment spans residues 262 to 282; that stretch reads IWVMLMFFALTAPIGIGIGIG. Topologically, residues 283–302 are extracellular; sequence VAEIYNENSPMALKVSGFLN. Residues 303 to 323 form a helical membrane-spanning segment; it reads ATASGILIYMALVDLVAPLFM. At 324 to 334 the chain is on the cytoplasmic side; that stretch reads NQKTQSSMKIQ. Residues 335–355 traverse the membrane as a helical segment; it reads VACSVSLVVGAGLMSLLAIWA.

This sequence belongs to the ZIP transporter (TC 2.A.5) family.

It localises to the cell membrane. In terms of biological role, zinc transporter involved in zinc uptake in roots. Targeted by BZIP23 transcription factor in response to zinc-deficient conditions. This chain is Probable zinc transporter 12 (ZIP12), found in Arabidopsis thaliana (Mouse-ear cress).